A 535-amino-acid polypeptide reads, in one-letter code: Cytochrome P450 71C3 (535 aa).

Residues Gln-23 to Ala-43 form a helical membrane-spanning segment. Heme is bound at residue Cys-475.

This sequence belongs to the cytochrome P450 family. The cofactor is heme.

The protein resides in the membrane. Its pathway is secondary metabolite biosynthesis; 2,4-dihydroxy-1,4-benzoxazin-3-one biosynthesis; 2,4-dihydroxy-1,4-benzoxazin-3-one from indoleglycerol phosphate: step 5/5. Catalyzes the conversion of 2-hydroxy-1,4-benzoxazin-3-one (HBOA) to 2,4-dihydroxy-1,4-benzoxazin-3-one (DIBOA). This chain is Cytochrome P450 71C3 (CYP71C3), found in Zea mays (Maize).